Consider the following 151-residue polypeptide: Ribosome maturation factor RimP (151 aa).

This sequence belongs to the RimP family.

The protein resides in the cytoplasm. Required for maturation of 30S ribosomal subunits. In Persephonella marina (strain DSM 14350 / EX-H1), this protein is Ribosome maturation factor RimP.